A 474-amino-acid chain; its full sequence is Trigger factor (474 aa).

One can recognise a PPIase FKBP-type domain in the interval 171–258 (GDVAVIDFQG…LKELKTRDLP (88 aa)). Positions 441 to 474 (TEVDAASATVETTATETAEEAPEAPKAKKGKKKA) are disordered. A compositionally biased stretch (low complexity) spans 444–456 (DAASATVETTATE).

It belongs to the FKBP-type PPIase family. Tig subfamily.

Its subcellular location is the cytoplasm. The catalysed reaction is [protein]-peptidylproline (omega=180) = [protein]-peptidylproline (omega=0). In terms of biological role, involved in protein export. Acts as a chaperone by maintaining the newly synthesized protein in an open conformation. Functions as a peptidyl-prolyl cis-trans isomerase. The polypeptide is Trigger factor (Synechococcus elongatus (strain ATCC 33912 / PCC 7942 / FACHB-805) (Anacystis nidulans R2)).